We begin with the raw amino-acid sequence, 277 residues long: MAFKHFNPTTPGQRQLVIVDRSCLYKGKSVKALTAGLSSKGGRNNHGRVTARFQGGGHKRSYRFVDFKRLKRGVFAKVERLEYDPNRTAFIALIRYEDGQLSYILAPQRLDVGDSIIAGSNVDVKPGNAMPLGNMPVGTIIHNVEMKPGKGGQIARSAGTYAQLVGRGQGMVILRLNSGEQRLVSGSCFATVGAVSNPDHANINDGKAGRSRWRGKRPHVRGVAMNPVDHPHGGGEGRTSGGRHPVSPWGKSTKGKRTRSNKATDKFIMHTRHQRKK.

Residues G222 to K277 are disordered.

This sequence belongs to the universal ribosomal protein uL2 family. Part of the 50S ribosomal subunit. Forms a bridge to the 30S subunit in the 70S ribosome.

In terms of biological role, one of the primary rRNA binding proteins. Required for association of the 30S and 50S subunits to form the 70S ribosome, for tRNA binding and peptide bond formation. It has been suggested to have peptidyltransferase activity; this is somewhat controversial. Makes several contacts with the 16S rRNA in the 70S ribosome. The polypeptide is Large ribosomal subunit protein uL2 (Bartonella quintana (strain Toulouse) (Rochalimaea quintana)).